The following is a 553-amino-acid chain: Arginine--tRNA ligase (553 aa).

The short motif at 132 to 140 (PTGDLHIGH) is the 'HIGH' region element.

It belongs to the class-I aminoacyl-tRNA synthetase family. As to quaternary structure, monomer.

The protein localises to the cytoplasm. It carries out the reaction tRNA(Arg) + L-arginine + ATP = L-arginyl-tRNA(Arg) + AMP + diphosphate. In Staphylococcus aureus (strain Mu50 / ATCC 700699), this protein is Arginine--tRNA ligase.